The primary structure comprises 401 residues: Formate-dependent phosphoribosylglycinamide formyltransferase (401 aa).

N(1)-(5-phospho-beta-D-ribosyl)glycinamide-binding positions include 22–23 and Glu82; that span reads EL. ATP-binding positions include Arg115, Lys157, 162–167, 197–200, and Glu205; these read SSGKGQ and EGFI. The 196-residue stretch at 120–315 folds into the ATP-grasp domain; it reads RLAAESLGLP…EFELHARAIL (196 aa). The Mg(2+) site is built by Glu274 and Glu286. N(1)-(5-phospho-beta-D-ribosyl)glycinamide contacts are provided by residues Asp293, Lys362, and 369–370; that span reads RR.

The protein belongs to the PurK/PurT family. Homodimer.

It carries out the reaction N(1)-(5-phospho-beta-D-ribosyl)glycinamide + formate + ATP = N(2)-formyl-N(1)-(5-phospho-beta-D-ribosyl)glycinamide + ADP + phosphate + H(+). The protein operates within purine metabolism; IMP biosynthesis via de novo pathway; N(2)-formyl-N(1)-(5-phospho-D-ribosyl)glycinamide from N(1)-(5-phospho-D-ribosyl)glycinamide (formate route): step 1/1. In terms of biological role, involved in the de novo purine biosynthesis. Catalyzes the transfer of formate to 5-phospho-ribosyl-glycinamide (GAR), producing 5-phospho-ribosyl-N-formylglycinamide (FGAR). Formate is provided by PurU via hydrolysis of 10-formyl-tetrahydrofolate. In Cupriavidus necator (strain ATCC 17699 / DSM 428 / KCTC 22496 / NCIMB 10442 / H16 / Stanier 337) (Ralstonia eutropha), this protein is Formate-dependent phosphoribosylglycinamide formyltransferase.